Reading from the N-terminus, the 341-residue chain is Processive diacylglycerol beta-glycosyltransferase (341 aa).

It belongs to the glycosyltransferase 2 family. It depends on Mg(2+) as a cofactor.

It localises to the cell membrane. The catalysed reaction is a 1,2-diacyl-sn-glycerol + UDP-alpha-D-glucose = a 1,2-diacyl-3-O-(beta-D-glucopyranosyl)-sn-glycerol + UDP + H(+). It catalyses the reaction a 1,2-diacyl-sn-glycerol + UDP-alpha-D-galactose = a 1,2-diacyl-3-O-(beta-D-galactosyl)-sn-glycerol + UDP + H(+). The enzyme catalyses a 1,2-diacyl-3-O-(beta-D-galactosyl)-sn-glycerol + UDP-alpha-D-glucose = a 1,2-diacyl-3-O-[beta-D-glucopyranosyl-(1-&gt;6)-beta-D-galactopyranosyl]-sn-glycerol + UDP + H(+). It carries out the reaction a 1,2-diacyl-3-O-(beta-D-galactosyl)-sn-glycerol + UDP-alpha-D-galactose = a 1,2-diacyl-3-O-[beta-D-galactosyl-(1-&gt;6)-beta-D-galactosyl]-sn-glycerol + UDP + H(+). With respect to regulation, activated by the negatively charged lipid phosphatidylglycerol (PG). Its function is as follows. Processive glycosyltransferase involved in the biosynthesis of both the non-bilayer-prone beta-monoglycosyldiacylglycerol and the bilayer-forming membrane lipid glucosyl-galactosyldiacylglycerol and digalactosyl-diacylglycerol. These components contribute to regulate the properties and stability of the membrane. Catalyzes sequentially the transfers of glucosyl or galactosyl residues from UDP-Glc or UDP-Gal to diacylglycerol (DAG) acceptor to form the corresponding beta-glycosyl-DAG (3-O-(beta-D-glycopyranosyl)-1,2-diacyl-sn-glycerol). Then, only beta-galactosyl-DAG (3-O-(beta-D-galactopyranosyl)-1,2-diacyl-sn-glycerol) can act as acceptor to give the beta-glycosyl-beta-galactosyl-DAG product (3-O-(beta-D-glycopyranosyl-(1-&gt;6)-D-galactopyranosyl)-1,2-diacyl-sn-glycerol). It can also use alpha-Gal-beta-Gal-DAG, ceramide (Cer) and beta-Gal-Cer as sugar acceptors. The enzyme is supposed to be mainly a galactosyltransferase, with higher glycosyltransferase activity for the addition of the second glycosyl on beta-Gal-DAG as acceptor. The main glycolipid produced in vivo is beta-Glc-beta-Gal-DAG with a beta-1,6 linkage. The protein is Processive diacylglycerol beta-glycosyltransferase of Mycoplasma pneumoniae (strain ATCC 29342 / M129 / Subtype 1) (Mycoplasmoides pneumoniae).